The sequence spans 236 residues: 7-cyano-7-deazaguanine synthase (236 aa).

Position 7–17 (7–17) interacts with ATP; it reads CSGGLDSVTLA. Zn(2+)-binding residues include Cys185, Cys193, Cys196, and Cys199.

Belongs to the QueC family. Requires Zn(2+) as cofactor.

The catalysed reaction is 7-carboxy-7-deazaguanine + NH4(+) + ATP = 7-cyano-7-deazaguanine + ADP + phosphate + H2O + H(+). The protein operates within purine metabolism; 7-cyano-7-deazaguanine biosynthesis. Functionally, catalyzes the ATP-dependent conversion of 7-carboxy-7-deazaguanine (CDG) to 7-cyano-7-deazaguanine (preQ(0)). The protein is 7-cyano-7-deazaguanine synthase of Rhizobium johnstonii (strain DSM 114642 / LMG 32736 / 3841) (Rhizobium leguminosarum bv. viciae).